A 382-amino-acid chain; its full sequence is Gap junction alpha-1 protein (382 aa).

At 2–23 (GDWSALGKLLDKVQAYSTAGGK) the chain is on the cytoplasmic side. Serine 5 carries the post-translational modification Phosphoserine. Residues 24-44 (VWLSVLFIFRILLLGTAVESA) form a helical membrane-spanning segment. Residues 45–76 (WGDEQSAFRCNTQQPGCENVCYDKSFPISHVR) are Extracellular-facing. 2 disulfides stabilise this stretch: cysteine 54-cysteine 192 and cysteine 187-cysteine 198. The helical transmembrane segment at 77–97 (FWVLQIIFVSVPTLLYLAHVF) threads the bilayer. The Cytoplasmic segment spans residues 98-155 (YVMRKEEKLNKKEEELKVAQTDGANVDMHLKQIEIKKFKYGIEEHGKVKMRGGLLRTY). Lysine 144 is covalently cross-linked (Glycyl lysine isopeptide (Lys-Gly) (interchain with G-Cter in SUMO)). The chain crosses the membrane as a helical span at residues 156 to 176 (IISILFKSVFEVAFLLIQWYI). Residues 177–207 (YGFSLSAVYTCKRDPCPHQVDCFLSRPTEKT) lie on the Extracellular side of the membrane. Residues 208-228 (IFIIFMLVVSLVSLALNIIEL) traverse the membrane as a helical segment. Over 229-382 (FYVFFKGIKD…SRPRPDDLEI (154 aa)) the chain is Cytoplasmic. Lysine 237 is covalently cross-linked (Glycyl lysine isopeptide (Lys-Gly) (interchain with G-Cter in SUMO)). Residues 244–382 (SDLYHATTGP…SRPRPDDLEI (139 aa)) form an interaction with NOV region. Tyrosine 247 is modified (phosphotyrosine). Residues serine 255, serine 257, and serine 262 each carry the phosphoserine modification. Residues 264–382 (TYAYFNGCSS…SRPRPDDLEI (119 aa)) form an interaction with UBQLN4 region. Residue cysteine 271 is modified to S-nitrosocysteine. Residue threonine 275 is modified to Phosphothreonine. Residues serine 306 and serine 314 each carry the phosphoserine modification. A compositionally biased stretch (polar residues) spans 317 to 332 (QNRMGQAGSTISNSHA). A disordered region spans residues 317 to 382 (QNRMGQAGST…SRPRPDDLEI (66 aa)). Serine 325 carries the post-translational modification Phosphoserine; by CK1. Threonine 326 bears the Phosphothreonine mark. Residues serine 328 and serine 330 each carry the phosphoserine; by CK1 modification. A phosphoserine mark is found at serine 344 and serine 365. The span at 362 to 374 (RPSSRASSRASSR) shows a compositional bias: low complexity. Position 368 is a phosphoserine; by PKC/PRKCG and PKC/PRKCD (serine 368). Phosphoserine is present on residues serine 369 and serine 373.

This sequence belongs to the connexin family. Alpha-type (group II) subfamily. As to quaternary structure, a connexon is composed of a hexamer of connexins. Interacts with SGSM3. Interacts with RIC1/CIP150. Interacts with CNST and CSNK1D. Interacts (via C-terminus) with TJP1. Interacts (via C-terminus) with SRC (via SH3 domain). Interacts (not ubiquitinated) with UBQLN4 (via UBA domain). Interacts with NOV. Interacts with TMEM65. Interacts with ANK3/ANKG and PKP2. Phosphorylation at Ser-325, Ser-328 and Ser-330 by CK1 modulates gap junction assembly. Phosphorylated at Ser-368 by PRKCG; phosphorylation induces disassembly of gap junction plaques and inhibition of gap junction activity. Phosphorylation at Ser-368 by PRKCD triggers its internalization into small vesicles leading to proteasome-mediated degradation. In terms of processing, sumoylated with SUMO1, SUMO2 and SUMO3, which may regulate the level of functional Cx43 gap junctions at the plasma membrane. May be desumoylated by SENP1 or SENP2. Post-translationally, S-nitrosylation at Cys-271 is enriched at the muscle endothelial gap junction in arteries, it augments channel permeability and may regulate of smooth muscle cell to endothelial cell communication. Acetylated in the developing cortex; leading to delocalization from the cell membrane.

It is found in the cell membrane. Its subcellular location is the cell junction. It localises to the gap junction. The protein resides in the endoplasmic reticulum. In terms of biological role, gap junction protein that acts as a regulator of bladder capacity. A gap junction consists of a cluster of closely packed pairs of transmembrane channels, the connexons, through which materials of low MW diffuse from one cell to a neighboring cell. May play a critical role in the physiology of hearing by participating in the recycling of potassium to the cochlear endolymph. Negative regulator of bladder functional capacity: acts by enhancing intercellular electrical and chemical transmission, thus sensitizing bladder muscles to cholinergic neural stimuli and causing them to contract. May play a role in cell growth inhibition through the regulation of NOV expression and localization. Plays an essential role in gap junction communication in the ventricles. The polypeptide is Gap junction alpha-1 protein (GJA1) (Erinaceus europaeus (Western European hedgehog)).